We begin with the raw amino-acid sequence, 449 residues long: MDLRPELPTASSASQVHPGAAAAAAAASIPVSMAGNLLRGPPLLLRAADKYPRTPKCARCRNHGVVSALKGHKRYCRWKDCMCAKCTLIAERQRVMAAQVALRRQQAQEESEARELQLLYGTAEGPAIAAANGIIPPRPNYEVFGSVSSESNSADSSIQKYELFPKNQLSGSATPQPSAGKPASTEGDSAPGISSPDGRHGGSGSENGDSESFISSPVSKPLKDGEETPGSVSSIGSDSGSETDKDDQEPSPSSAASRHMNAIDILTRVFPSHKRSVLELVLQGCGKDVVQAIEQILNNSGAQGPNKAGPDETWTAERMLQNAQQLPAASATTTAPTRPMLPGAMTLSNRSAFSPLQPNAPHFGADPSTYPLGTHLGLNPLRLAYSAHSRGLAFMTPYSTTGLMPTLGFRPPMYYAFSDLIRDRTMLHKEQGYASGLYGPLVNNTPEKQ.

The segment at residues 57 to 104 (CARCRNHGVVSALKGHKRYCRWKDCMCAKCTLIAERQRVMAAQVALRR) is a DNA-binding region (DM). Positions 166 to 259 (KNQLSGSATP…PSPSSAASRH (94 aa)) are disordered. The span at 167-177 (NQLSGSATPQP) shows a compositional bias: polar residues. The segment covering 230–240 (GSVSSIGSDSG) has biased composition (low complexity). Residues 260-295 (MNAIDILTRVFPSHKRSVLELVLQGCGKDVVQAIEQ) form the DMA domain.

The protein belongs to the DMRT family.

It localises to the nucleus. May be involved in sexual development. This chain is Doublesex- and mab-3-related transcription factor A2 (dmrta2), found in Oreochromis niloticus (Nile tilapia).